The primary structure comprises 252 residues: dITP/XTP pyrophosphatase (252 aa).

Residue Thr-7 to Lys-12 coordinates substrate. Asp-74 serves as the catalytic Proton acceptor. Position 74 (Asp-74) interacts with Mg(2+). Substrate is bound by residues Ser-75 and Phe-193 to Asp-196. The tract at residues Pro-201–Glu-224 is disordered. Substrate contacts are provided by residues Lys-230 and His-235–Arg-236.

Belongs to the HAM1 NTPase family. As to quaternary structure, homodimer. Mg(2+) is required as a cofactor.

The catalysed reaction is XTP + H2O = XMP + diphosphate + H(+). It carries out the reaction dITP + H2O = dIMP + diphosphate + H(+). It catalyses the reaction ITP + H2O = IMP + diphosphate + H(+). Its function is as follows. Pyrophosphatase that catalyzes the hydrolysis of nucleoside triphosphates to their monophosphate derivatives, with a high preference for the non-canonical purine nucleotides XTP (xanthosine triphosphate), dITP (deoxyinosine triphosphate) and ITP. Seems to function as a house-cleaning enzyme that removes non-canonical purine nucleotides from the nucleotide pool, thus preventing their incorporation into DNA/RNA and avoiding chromosomal lesions. The protein is dITP/XTP pyrophosphatase of Bifidobacterium longum subsp. infantis (strain ATCC 15697 / DSM 20088 / JCM 1222 / NCTC 11817 / S12).